Here is a 194-residue protein sequence, read N- to C-terminus: MKVGVLALQGDVSEHIDAFTAALRKRGYTEDSPVIEVRNPEDLAGCAALAIPGGESTTISRLVDKNGLYKPIRDFKGGIFATCAGMILMATDVGDPRVHSLGLLDMTVDRNAFGRQRESFEADIRVQGLDGGSFHAVFIRGPVVTEARDGVVVLARTDKGIVAVEKGRHMALAFHPELGGDLRLHERFLKNLGV.

54–56 (GES) provides a ligand contact to L-glutamine. Cysteine 83 serves as the catalytic Nucleophile. L-glutamine-binding positions include arginine 110 and 139-140 (IR). Active-site charge relay system residues include histidine 175 and glutamate 177.

This sequence belongs to the glutaminase PdxT/SNO family. In terms of assembly, in the presence of PdxS, forms a dodecamer of heterodimers. Only shows activity in the heterodimer.

The catalysed reaction is aldehydo-D-ribose 5-phosphate + D-glyceraldehyde 3-phosphate + L-glutamine = pyridoxal 5'-phosphate + L-glutamate + phosphate + 3 H2O + H(+). It catalyses the reaction L-glutamine + H2O = L-glutamate + NH4(+). The protein operates within cofactor biosynthesis; pyridoxal 5'-phosphate biosynthesis. Its function is as follows. Catalyzes the hydrolysis of glutamine to glutamate and ammonia as part of the biosynthesis of pyridoxal 5'-phosphate. The resulting ammonia molecule is channeled to the active site of PdxS. This Methanoregula boonei (strain DSM 21154 / JCM 14090 / 6A8) protein is Pyridoxal 5'-phosphate synthase subunit PdxT.